Consider the following 166-residue polypeptide: MAIKLEDKKAIVAEVNEAAKAGLSAVVADARGVTVGAMTGLRKEAREAGVYVRVVRNTLLKRAVADTEFSVLNDVFTGPTLIAFSNEHPGAAARLFKEFAKGQDKFEIKAAAFEGKFLAANQIDVLASLPTRNEAISQLMSVIQGATSKLARTLAAVRDQKEAAAA.

The protein belongs to the universal ribosomal protein uL10 family. Part of the ribosomal stalk of the 50S ribosomal subunit. The N-terminus interacts with L11 and the large rRNA to form the base of the stalk. The C-terminus forms an elongated spine to which L12 dimers bind in a sequential fashion forming a multimeric L10(L12)X complex.

Functionally, forms part of the ribosomal stalk, playing a central role in the interaction of the ribosome with GTP-bound translation factors. This is Large ribosomal subunit protein uL10 from Pseudomonas syringae pv. syringae (strain B728a).